The primary structure comprises 176 residues: Ubiquitin-conjugating enzyme E2-20 kDa (176 aa).

Positions 1-20 (MDSDMQNQNPHTNSKNSSSA) are enriched in polar residues. The tract at residues 1 to 25 (MDSDMQNQNPHTNSKNSSSAGMAVD) is disordered. One can recognise a UBC core domain in the interval 28–175 (SVTKRLRSEL…LMQRYKEIDE (148 aa)). The active-site Glycyl thioester intermediate is the cysteine 113.

The protein belongs to the ubiquitin-conjugating enzyme family.

It carries out the reaction S-ubiquitinyl-[E1 ubiquitin-activating enzyme]-L-cysteine + [E2 ubiquitin-conjugating enzyme]-L-cysteine = [E1 ubiquitin-activating enzyme]-L-cysteine + S-ubiquitinyl-[E2 ubiquitin-conjugating enzyme]-L-cysteine.. The protein operates within protein modification; protein ubiquitination. Its function is as follows. Catalyzes the covalent attachment of ubiquitin to other proteins. This is Ubiquitin-conjugating enzyme E2-20 kDa (ubc11) from Schizosaccharomyces pombe (strain 972 / ATCC 24843) (Fission yeast).